We begin with the raw amino-acid sequence, 406 residues long: 8-amino-7-oxononanoate synthase (406 aa).

Arg21 contacts substrate. Gly112–Tyr113 serves as a coordination point for pyridoxal 5'-phosphate. His137 is a substrate binding site. The pyridoxal 5'-phosphate site is built by Ser183, His211, and Thr239. At Lys242 the chain carries N6-(pyridoxal phosphate)lysine. Residue Thr358 coordinates substrate.

The protein belongs to the class-II pyridoxal-phosphate-dependent aminotransferase family. BioF subfamily. Homodimer. The cofactor is pyridoxal 5'-phosphate.

The catalysed reaction is 6-carboxyhexanoyl-[ACP] + L-alanine + H(+) = (8S)-8-amino-7-oxononanoate + holo-[ACP] + CO2. It participates in cofactor biosynthesis; biotin biosynthesis. Functionally, catalyzes the decarboxylative condensation of pimeloyl-[acyl-carrier protein] and L-alanine to produce 8-amino-7-oxononanoate (AON), [acyl-carrier protein], and carbon dioxide. The chain is 8-amino-7-oxononanoate synthase from Burkholderia orbicola (strain MC0-3).